The sequence spans 203 residues: Guanylate kinase (203 aa).

Residues 3–181 (GTLYIVAAPS…AVSEMCAIFT (179 aa)) form the Guanylate kinase-like domain. 10-17 (APSGAGKS) contributes to the ATP binding site.

This sequence belongs to the guanylate kinase family.

Its subcellular location is the cytoplasm. It carries out the reaction GMP + ATP = GDP + ADP. Essential for recycling GMP and indirectly, cGMP. This is Guanylate kinase from Xanthomonas campestris pv. campestris (strain 8004).